Here is a 390-residue protein sequence, read N- to C-terminus: 5-hydroxytryptamine receptor 1B (390 aa).

At 1-46 (MEEPGAQCAPPXPAGSETWVPQANLSSAPSQNCSAKDYIYQDSIAL) the chain is on the extracellular side. N-linked (GlcNAc...) asparagine glycans are attached at residues asparagine 24 and asparagine 32. The chain crosses the membrane as a helical span at residues 47-72 (PWKVLLVMLLALITLATTLSNAFVIA). Residues 73-86 (TVYRTRKLHTPANY) are Cytoplasmic-facing. Residues 87-111 (LIASLAVTDLLVSILVMPISTMYTV) form a helical membrane-spanning segment. Residues 112 to 119 (TGRWTLGQ) lie on the Extracellular side of the membrane. Residues 120–145 (VVCDFWLSSDITCCTASILHLCVIAL) traverse the membrane as a helical segment. Residues cysteine 122 and cysteine 199 are joined by a disulfide bond. Ergotamine contacts are provided by aspartate 129 and threonine 134. A DRY motif; important for ligand-induced conformation changes and signaling motif is present at residues 146 to 148 (DRY). Topologically, residues 146–165 (DRYWAITDAVEYSAKRTPKR) are cytoplasmic. The helical transmembrane segment at 166–184 (AAVMIALVWVFSISISLPP) threads the bilayer. Topologically, residues 185–205 (FFWRQAKAEEEVSECVVNTDH) are extracellular. Valine 201 contributes to the ergotamine binding site. Residues 206-229 (ILYTVYSTVGAFYFPTLLLIALYG) traverse the membrane as a helical segment. At 230-315 (RIYVEARSRI…AARERKATKT (86 aa)) the chain is on the cytoplasmic side. Residues 259–272 (DSPGSTSSVTSINS) are compositionally biased toward polar residues. The interval 259–281 (DSPGSTSSVTSINSRVPDVPSES) is disordered. The chain crosses the membrane as a helical span at residues 316–337 (LGIILGAFIVCWLPFFIISLVM). Topologically, residues 338–347 (PICKDACWFH) are extracellular. A helical transmembrane segment spans residues 348–370 (LAIFDFFTWLGYLNSLINPIIYT). Positions 365 to 369 (NPIIY) match the NPxxY motif; important for ligand-induced conformation changes and signaling motif. The Cytoplasmic portion of the chain corresponds to 371–390 (MSNEDFKQAFHKLIRFKCTS). The S-palmitoyl cysteine moiety is linked to residue cysteine 388.

It belongs to the G-protein coupled receptor 1 family. In terms of assembly, homodimer. Heterodimer with HTR1D. In terms of processing, phosphorylated. Desensitization of the receptor may be mediated by its phosphorylation. Post-translationally, palmitoylated.

Its subcellular location is the cell membrane. G-protein coupled receptor for 5-hydroxytryptamine (serotonin). Also functions as a receptor for ergot alkaloid derivatives, various anxiolytic and antidepressant drugs and other psychoactive substances, such as lysergic acid diethylamide (LSD). Ligand binding causes a conformation change that triggers signaling via guanine nucleotide-binding proteins (G proteins) and modulates the activity of downstream effectors, such as adenylate cyclase. HTR1B is coupled to G(i)/G(o) G alpha proteins and mediates inhibitory neurotransmission by inhibiting adenylate cyclase activity. Arrestin family members inhibit signaling via G proteins and mediate activation of alternative signaling pathways. Regulates the release of 5-hydroxytryptamine, dopamine and acetylcholine in the brain, and thereby affects neural activity, nociceptive processing, pain perception, mood and behavior. Besides, plays a role in vasoconstriction of cerebral arteries. The polypeptide is 5-hydroxytryptamine receptor 1B (HTR1B) (Gorilla gorilla gorilla (Western lowland gorilla)).